The chain runs to 155 residues: Ubiquitin-conjugating enzyme E2 14 (155 aa).

The UBC core domain occupies 7–154 (SSSRRLTKEY…ARDYVEQFAK (148 aa)). The Glycyl thioester intermediate role is filled by C91.

This sequence belongs to the ubiquitin-conjugating enzyme family.

It catalyses the reaction S-ubiquitinyl-[E1 ubiquitin-activating enzyme]-L-cysteine + [E2 ubiquitin-conjugating enzyme]-L-cysteine = [E1 ubiquitin-activating enzyme]-L-cysteine + S-ubiquitinyl-[E2 ubiquitin-conjugating enzyme]-L-cysteine.. The protein operates within protein modification; protein ubiquitination. Functionally, catalyzes the covalent attachment of ubiquitin to other proteins. Mediates the selective degradation of short-lived and abnormal proteins. This chain is Ubiquitin-conjugating enzyme E2 14 (ubc14), found in Schizosaccharomyces pombe (strain 972 / ATCC 24843) (Fission yeast).